We begin with the raw amino-acid sequence, 362 residues long: Histidinol-phosphate aminotransferase (362 aa).

The residue at position 211 (K211) is an N6-(pyridoxal phosphate)lysine.

This sequence belongs to the class-II pyridoxal-phosphate-dependent aminotransferase family. Histidinol-phosphate aminotransferase subfamily. Homodimer. Requires pyridoxal 5'-phosphate as cofactor.

It catalyses the reaction L-histidinol phosphate + 2-oxoglutarate = 3-(imidazol-4-yl)-2-oxopropyl phosphate + L-glutamate. The protein operates within amino-acid biosynthesis; L-histidine biosynthesis; L-histidine from 5-phospho-alpha-D-ribose 1-diphosphate: step 7/9. The protein is Histidinol-phosphate aminotransferase of Serratia proteamaculans (strain 568).